A 526-amino-acid polypeptide reads, in one-letter code: Tyrosine-protein kinase transforming protein Src (526 aa).

Positions 1-52 (MGSSKSKPKDPSQRRHSLEPPDSTHHGGFPASQTPDETAAPDAHRNPSRSFG) are disordered. Glycine 2 is lipidated: N-myristoyl glycine; by host. Residues 7–25 (KPKDPSQRRHSLEPPDSTH) are compositionally biased toward basic and acidic residues. SH3 domains follow at residues 71–139 (TSPQ…YVAP) and 81–142 (GGVT…PSDS). Residues 148-245 (WYFGKITRRE…GLCHRLANVC (98 aa)) enclose the SH2 domain. In terms of domain architecture, Protein kinase spans 267–517 (LRLEAKLGQG…TFKYLQAQLL (251 aa)). ATP contacts are provided by residues 273–281 (LGQGCFGEV) and lysine 295. Aspartate 386 (proton acceptor) is an active-site residue. Tyrosine 416 is subject to Phosphotyrosine; by autocatalysis.

This sequence belongs to the protein kinase superfamily. Tyr protein kinase family. SRC subfamily. In terms of assembly, homodimer. In terms of processing, the phosphorylated form is termed pp60v-src.

It carries out the reaction L-tyrosyl-[protein] + ATP = O-phospho-L-tyrosyl-[protein] + ADP + H(+). Functionally, this phosphoprotein, required for both the initiation and the maintenance of neoplastic transformation, is a protein kinase that catalyzes the phosphorylation of tyrosine residues in vitro. This chain is Tyrosine-protein kinase transforming protein Src (V-SRC), found in Gallus gallus (Chicken).